Consider the following 365-residue polypeptide: 2-aminoethylphosphonate--pyruvate transaminase (365 aa).

Position 194 is an N6-(pyridoxal phosphate)lysine (K194).

Belongs to the class-V pyridoxal-phosphate-dependent aminotransferase family. PhnW subfamily. As to quaternary structure, homodimer. Pyridoxal 5'-phosphate serves as cofactor.

The catalysed reaction is (2-aminoethyl)phosphonate + pyruvate = phosphonoacetaldehyde + L-alanine. In terms of biological role, involved in phosphonate degradation. The protein is 2-aminoethylphosphonate--pyruvate transaminase of Bacillus cereus (strain Q1).